The primary structure comprises 539 residues: Glycerol kinase (539 aa).

Thr49 provides a ligand contact to ADP. 3 residues coordinate ATP: Thr49, Thr50, and Ser51. Thr49 is a sn-glycerol 3-phosphate binding site. Position 53 (Arg53) interacts with ADP. Sn-glycerol 3-phosphate contacts are provided by Arg119, Glu120, Tyr171, and Asp280. Glycerol-binding residues include Arg119, Glu120, Tyr171, Asp280, and Gln281. Residues Thr302 and Gly345 each coordinate ADP. Positions 302, 345, 349, and 446 each coordinate ATP. Residues Gly446 and Asn450 each contribute to the ADP site.

It belongs to the FGGY kinase family.

The enzyme catalyses glycerol + ATP = sn-glycerol 3-phosphate + ADP + H(+). It participates in polyol metabolism; glycerol degradation via glycerol kinase pathway; sn-glycerol 3-phosphate from glycerol: step 1/1. Inhibited by fructose 1,6-bisphosphate (FBP). Its function is as follows. Key enzyme in the regulation of glycerol uptake and metabolism. Catalyzes the phosphorylation of glycerol to yield sn-glycerol 3-phosphate. The polypeptide is Glycerol kinase (Rhodopirellula baltica (strain DSM 10527 / NCIMB 13988 / SH1)).